A 154-amino-acid chain; its full sequence is Ascorbate-specific PTS system EIIA component (154 aa).

Residues 6–150 (SLAENKSIRL…QEVLDLIDRT (145 aa)) enclose the PTS EIIA type-2 domain. Catalysis depends on His68, which acts as the Tele-phosphohistidine intermediate. A Phosphohistidine modification is found at His68.

The protein localises to the cytoplasm. Functionally, the phosphoenolpyruvate-dependent sugar phosphotransferase system (sugar PTS), a major carbohydrate active transport system, catalyzes the phosphorylation of incoming sugar substrates concomitantly with their translocation across the cell membrane. The enzyme II UlaABC PTS system is involved in ascorbate transport. The sequence is that of Ascorbate-specific PTS system EIIA component (ulaC) from Escherichia coli O157:H7.